A 240-amino-acid polypeptide reads, in one-letter code: UDP-2,3-diacylglucosamine hydrolase (240 aa).

Residues Asp-7, His-9, Asp-40, Asn-78, and His-113 each contribute to the Mn(2+) site. A substrate-binding site is contributed by 78–79 (NR). Residues Asp-121, Ser-159, Thr-163, Lys-166, and His-194 each contribute to the substrate site. Mn(2+) is bound by residues His-194 and His-196.

The protein belongs to the LpxH family. Mn(2+) serves as cofactor.

It localises to the cell inner membrane. It catalyses the reaction UDP-2-N,3-O-bis[(3R)-3-hydroxytetradecanoyl]-alpha-D-glucosamine + H2O = 2-N,3-O-bis[(3R)-3-hydroxytetradecanoyl]-alpha-D-glucosaminyl 1-phosphate + UMP + 2 H(+). It participates in glycolipid biosynthesis; lipid IV(A) biosynthesis; lipid IV(A) from (3R)-3-hydroxytetradecanoyl-[acyl-carrier-protein] and UDP-N-acetyl-alpha-D-glucosamine: step 4/6. Functionally, hydrolyzes the pyrophosphate bond of UDP-2,3-diacylglucosamine to yield 2,3-diacylglucosamine 1-phosphate (lipid X) and UMP by catalyzing the attack of water at the alpha-P atom. Involved in the biosynthesis of lipid A, a phosphorylated glycolipid that anchors the lipopolysaccharide to the outer membrane of the cell. This chain is UDP-2,3-diacylglucosamine hydrolase, found in Pseudomonas putida (strain W619).